The following is a 305-amino-acid chain: Oxygen-dependent coproporphyrinogen-III oxidase (305 aa).

A substrate-binding site is contributed by serine 93. A divalent metal cation is bound by residues histidine 97 and histidine 107. The active-site Proton donor is the histidine 107. Residue 109-111 coordinates substrate; that stretch reads NVR. Residues histidine 146 and histidine 176 each coordinate a divalent metal cation. The important for dimerization stretch occupies residues 241-276; it reads YVEFNLVFDRGTLFGLQSGGRTESILMSLPPQVRWG. Residue 259–261 participates in substrate binding; that stretch reads GGR.

This sequence belongs to the aerobic coproporphyrinogen-III oxidase family. As to quaternary structure, homodimer. Requires a divalent metal cation as cofactor.

The protein localises to the cytoplasm. It carries out the reaction coproporphyrinogen III + O2 + 2 H(+) = protoporphyrinogen IX + 2 CO2 + 2 H2O. It functions in the pathway porphyrin-containing compound metabolism; protoporphyrin-IX biosynthesis; protoporphyrinogen-IX from coproporphyrinogen-III (O2 route): step 1/1. Its function is as follows. Involved in the heme biosynthesis. Catalyzes the aerobic oxidative decarboxylation of propionate groups of rings A and B of coproporphyrinogen-III to yield the vinyl groups in protoporphyrinogen-IX. The chain is Oxygen-dependent coproporphyrinogen-III oxidase from Pseudomonas aeruginosa (strain LESB58).